The primary structure comprises 115 residues: Double-headed protease inhibitor, submandibular gland (115 aa).

Kazal-like domains are found at residues 6–66 and 67–115; these read IGRE…ACDI and ECTE…HGEC. 6 disulfide bridges follow: C12-C46, C24-C43, C32-C64, C68-C97, C75-C94, and C83-C115.

The protein localises to the secreted. This inhibitor is composed of two homologous actively inhibiting halves: one which inhibits trypsin, the other which inhibits elastase. The polypeptide is Double-headed protease inhibitor, submandibular gland (Vulpes vulpes (Red fox)).